Reading from the N-terminus, the 677-residue chain is Bargin (677 aa).

2 stretches are compositionally biased toward low complexity: residues 1 to 13 (MDRGLPGPATPAV) and 29 to 39 (APHAAAGPDGQ). Disordered regions lie at residues 1 to 39 (MDRGLPGPATPAVTPQPPARPQDDEEAAAPHAAAGPDGQ) and 168 to 190 (SQATKNSGSSQGLGGSPGSHSHT). Positions 25–270 (EEAAAPHAAA…RENHGQADHS (246 aa)) constitute a BAR domain. Phosphoserine occurs at positions 183, 270, and 272. The Rho-GAP domain occupies 284-477 (VSLATHLQEL…ALIQSADTLF (194 aa)). Residues 504–577 (SEELPSTAVP…DMARRSTGSL (74 aa)) are disordered. Over residues 516–530 (ATTPAPAPAPAPAPA) the composition is skewed to pro residues. Phosphoserine is present on residues Ser552 and Ser558. Residues 574-677 (TGSLAAAVET…IADLTEGLED (104 aa)) are mediates non-covalent binding of poly-ubiquitin chains.

In terms of tissue distribution, expressed in brain (at protein level).

It is found in the cell membrane. The protein resides in the cytoplasm. It localises to the cytosol. GTPase activating protein (GAP) which specifically converts GTP-bound RAC1 and CDC42 in their inactive GDP-bound form. The GAP activity is enhanced by the non-covalent binding of K-29 and K-48 polyubiquitin chains. The chain is Bargin from Homo sapiens (Human).